The chain runs to 338 residues: Phenylalanine--tRNA ligase alpha subunit (338 aa).

A Mg(2+)-binding site is contributed by Glu-253.

Belongs to the class-II aminoacyl-tRNA synthetase family. Phe-tRNA synthetase alpha subunit type 1 subfamily. As to quaternary structure, tetramer of two alpha and two beta subunits. It depends on Mg(2+) as a cofactor.

The protein localises to the cytoplasm. It catalyses the reaction tRNA(Phe) + L-phenylalanine + ATP = L-phenylalanyl-tRNA(Phe) + AMP + diphosphate + H(+). The protein is Phenylalanine--tRNA ligase alpha subunit of Geotalea daltonii (strain DSM 22248 / JCM 15807 / FRC-32) (Geobacter daltonii).